We begin with the raw amino-acid sequence, 1901 residues long: Methylcytosine dioxygenase tet3 (1901 aa).

The CXXC-type zinc finger occupies 58–99 (SNKKRKRCGVCVPCLRKEPCGACYNCVNRSTSHQICKMRKCE). The Zn(2+) site is built by Cys65, Cys68, Cys71, Cys77, Cys80, Cys83, Cys93, and Cys98. 4 disordered regions span residues 434 to 455 (KNALPVPQSPRQTSWEQNKKSS), 602 to 658 (WWVP…EGSA), 751 to 787 (KDQCPTPSTHDTSSSSGQGDSANQHTNVSDVPGQNDL), and 808 to 867 (DFSL…PVSR). Composition is skewed to polar residues over residues 442–455 (SPRQTSWEQNKKSS) and 602–614 (WWVPSSQQAPVSK). Residues 640–652 (KPQRKQVQIKKPK) are compositionally biased toward basic residues. Residues 758–771 (STHDTSSSSGQGDS) are compositionally biased toward low complexity. The segment covering 847-867 (ENSTKPATHSNPALSNNPVSR) has biased composition (polar residues). Zn(2+)-binding residues include Cys957, Cys959, Cys1017, His1043, and Cys1045. Arg1085 contributes to the 2-oxoglutarate binding site. Zn(2+) contacts are provided by Cys1095, Cys1097, Cys1113, Cys1122, and Cys1182. Residue Cys1198 participates in 2-oxoglutarate binding. His1204 contacts Zn(2+). The Fe cation site is built by His1206 and Asp1208. His1240 is a binding site for 2-oxoglutarate. 4 disordered regions span residues 1282–1338 (SEPA…QQTK), 1457–1501 (YGSE…VETT), 1591–1624 (SNAPGLKDKQWPPYGTDVSVRQHDSLDSQSPGKV), and 1680–1745 (SATP…DEEI). Positions 1291 to 1325 (RQLEAKKAAAEKKKLQKEKLVSPDKTKQEPSDKKT) are enriched in basic and acidic residues. Polar residues predominate over residues 1326-1338 (CQQNPGVPQQQTK). Basic and acidic residues predominate over residues 1465–1474 (SFRRSSEVPH). A compositionally biased stretch (polar residues) spans 1477 to 1487 (SLQNPSSQKSV). 2 stretches are compositionally biased toward polar residues: residues 1680–1693 (SATPSDRSSITPCS) and 1702–1719 (SFPNPTVNSLKTDSSQNH). Residue His1780 coordinates Fe cation. 1795–1797 (RIS) lines the 2-oxoglutarate pocket.

The protein belongs to the TET family. It depends on Fe(2+) as a cofactor. Zn(2+) is required as a cofactor.

Its subcellular location is the nucleus. It localises to the chromosome. It catalyses the reaction a 5-methyl-2'-deoxycytidine in DNA + 2-oxoglutarate + O2 = a 5-hydroxymethyl-2'-deoxycytidine in DNA + succinate + CO2. The enzyme catalyses a 5-hydroxymethyl-2'-deoxycytidine in DNA + 2-oxoglutarate + O2 = a 5-formyl-2'-deoxycytidine in DNA + succinate + CO2 + H2O. The catalysed reaction is a 5-formyl-2'-deoxycytidine in DNA + 2-oxoglutarate + O2 = a 5-carboxyl-2'-deoxycytidine in DNA + succinate + CO2 + H(+). In terms of biological role, dioxygenase that catalyzes the conversion of the modified genomic base 5-methylcytosine (5mC) into 5-hydroxymethylcytosine (5hmC) and plays a key role in epigenetic chromatin reprogramming during embryonic development. Conversion of 5mC into 5hmC probably constitutes the first step in cytosine demethylation. Selectively binds to the promoter region of target genes and contributes to regulate the expression of numerous developmental genes, including pax6, rax, sox9 and six3. May also contribute to the regulation of target genes in ways that do not require its enzyme activity. The sequence is that of Methylcytosine dioxygenase tet3 from Xenopus tropicalis (Western clawed frog).